A 385-amino-acid chain; its full sequence is ATP synthase subunit a-1 (385 aa).

A propeptide spanning residues 1 to 133 (MRRIFLFDEN…ALNIVGQAAA (133 aa)) is cleaved from the precursor. Helical transmembrane passes span 154-174 (FSFT…LLLI), 220-240 (FFPC…QGMI), 249-269 (HFLI…IVGF), 276-296 (FFSF…LVLL), 316-336 (MMAG…MLCM), 339-359 (IFYF…TGLE), and 362-382 (VAIL…NDAI).

This sequence belongs to the ATPase A chain family. F-type ATPases have 2 components, CF(1) - the catalytic core - and CF(0) - the membrane proton channel. CF(1) has five subunits: alpha(3), beta(3), gamma(1), delta(1), epsilon(1). CF(0) has three main subunits: a, b and c.

Its subcellular location is the mitochondrion inner membrane. Mitochondrial membrane ATP synthase (F(1)F(0) ATP synthase or Complex V) produces ATP from ADP in the presence of a proton gradient across the membrane which is generated by electron transport complexes of the respiratory chain. F-type ATPases consist of two structural domains, F(1) - containing the extramembraneous catalytic core and F(0) - containing the membrane proton channel, linked together by a central stalk and a peripheral stalk. During catalysis, ATP synthesis in the catalytic domain of F(1) is coupled via a rotary mechanism of the central stalk subunits to proton translocation. Key component of the proton channel; it may play a direct role in the translocation of protons across the membrane. The sequence is that of ATP synthase subunit a-1 (ATP6-1) from Arabidopsis thaliana (Mouse-ear cress).